The primary structure comprises 470 residues: 5-hydroxytryptamine receptor 2A (470 aa).

Over 1 to 80 (MDILCEENTS…LQEKNWSALL (80 aa)) the chain is Extracellular. N-linked (GlcNAc...) asparagine glycosylation occurs at N38. The helical transmembrane segment at 81 to 97 (TAVVIILTIAGNILVIM) threads the bilayer. At 98-111 (AVSLEKKLQNATNY) the chain is on the cytoplasmic side. A helical membrane pass occupies residues 112–137 (FLMSLAIADMLLGFLVMPVSTLTILY). Residues 138–146 (GYRWPLPSK) lie on the Extracellular side of the membrane. The chain crosses the membrane as a helical span at residues 147–171 (LCAVWIYLDVLFSTASIMHLCAISL). C148 and C227 are joined by a disulfide. D155 contributes to the serotonin binding site. Residues 172 to 174 (DRY) carry the DRY motif; important for ligand-induced conformation changes motif. The Cytoplasmic segment spans residues 172–191 (DRYVAIQNPIHHSRFNSRTK). A helical transmembrane segment spans residues 192-215 (AFLKIIAVWTISVGISMPIPVFGL). Topologically, residues 216 to 232 (QDDSKVFKEGSCLLADE) are extracellular. A helical transmembrane segment spans residues 233 to 258 (NFVLIGSFVAFFIPLTIMVITYFLTI). Topologically, residues 259 to 321 (KSLQKEATLC…QSISNEQKAC (63 aa)) are cytoplasmic. S280 is subject to Phosphoserine. Residues 322–347 (KVLGIVFFLFVVMWCPFFITNIMAVI) form a helical membrane-spanning segment. N342 contacts serotonin. The cysteines at positions 348 and 352 are disulfide-linked. Residues 348 to 355 (CKESCNRD) are Extracellular-facing. A helical transmembrane segment spans residues 356 to 381 (VIEALLNVFVWIGYLSSAVNPLVYTL). Positions 375–379 (NPLVY) match the NPxxY motif; important for ligand-induced conformation changes and signaling motif. Over 382–470 (FNKTYRSAFS…NTVNEKVSCV (89 aa)) the chain is Cytoplasmic. The segment at 424–470 (QMGPKKNSKKDDKTTDNDCTMVALGKEHPEDAPADSSNTVNEKVSCV) is disordered. Over residues 458-470 (DSSNTVNEKVSCV) the composition is skewed to polar residues. Residues 468–470 (SCV) carry the PDZ-binding motif.

This sequence belongs to the G-protein coupled receptor 1 family. As to quaternary structure, interacts (via C-terminus) with MPDZ and PATJ. May interact (via C-terminus) with MPP3, PRDX6, DLG4, DLG1, CASK, APBA1 and MAGI2. Interacts with GRM2 and DRD2; this may affect signaling.

It localises to the cell membrane. The protein localises to the cell projection. Its subcellular location is the dendrite. The protein resides in the axon. It is found in the cytoplasmic vesicle. It localises to the membrane. The protein localises to the caveola. Its subcellular location is the presynapse. Its activity is regulated as follows. G-protein coupled receptor activity is regulated by lipids: oleamide increases HTR2A-mediated activity. Functionally, G-protein coupled receptor for 5-hydroxytryptamine (serotonin). Also functions as a receptor for various drugs and psychoactive substances, including mescaline, psilocybin, 1-(2,5-dimethoxy-4-iodophenyl)-2-aminopropane (DOI) and lysergic acid diethylamide (LSD). Ligand binding causes a conformation change that triggers signaling via guanine nucleotide-binding proteins (G proteins) and modulates the activity of downstream effectors. HTR2A is coupled to G(q)/G(11) G alpha proteins and activates phospholipase C-beta, releasing diacylglycerol (DAG) and inositol 1,4,5-trisphosphate (IP3) second messengers that modulate the activity of phosphatidylinositol 3-kinase and promote the release of Ca(2+) ions from intracellular stores, respectively. Beta-arrestin family members inhibit signaling via G proteins and mediate activation of alternative signaling pathways. Affects neural activity, perception, cognition and mood. Plays a role in the regulation of behavior, including responses to anxiogenic situations and psychoactive substances. Plays a role in intestinal smooth muscle contraction, and may play a role in arterial vasoconstriction. In Bos taurus (Bovine), this protein is 5-hydroxytryptamine receptor 2A (HTR2A).